The sequence spans 117 residues: MKLCAVIIASLLVCVAVASSSDNQKEFAQEKEMTREETQSLGEHEKDDEVTGSEERSCIEEWKTCENDCECCGMSTLCAASWVDGHEIKLCRNEGGKLKKVLHFIQKSVSKIKSCKK.

Residues 1-20 (MKLCAVIIASLLVCVAVASS) form the signal peptide. A disordered region spans residues 20–55 (SSDNQKEFAQEKEMTREETQSLGEHEKDDEVTGSEE). Residues 21–56 (SDNQKEFAQEKEMTREETQSLGEHEKDDEVTGSEER) constitute a propeptide that is removed on maturation. Basic and acidic residues predominate over residues 23–55 (NQKEFAQEKEMTREETQSLGEHEKDDEVTGSEE). 4 disulfides stabilise this stretch: cysteine 58-cysteine 72, cysteine 65-cysteine 78, cysteine 69-cysteine 115, and cysteine 71-cysteine 91.

The protein belongs to the neurotoxin 03 (Tx2) family. 02 subfamily. HNTX-XV sub-subfamily. Expressed by the venom gland.

The protein resides in the secreted. Putative ion channel inhibitor. In Cyriopagopus hainanus (Chinese bird spider), this protein is Hainantoxin-XV-4.